Here is a 212-residue protein sequence, read N- to C-terminus: Disintegrin-like halysetin (212 aa).

Residues 4-90 (PPVCGNELLE…ECPADVFHKN (87 aa)) form the Disintegrin domain. Intrachain disulfides connect cysteine 7–cysteine 26, cysteine 18–cysteine 36, cysteine 62–cysteine 82, cysteine 69–cysteine 94, cysteine 101–cysteine 106, cysteine 113–cysteine 128, cysteine 151–cysteine 158, cysteine 163–cysteine 174, and cysteine 200–cysteine 205. The D/ECD-tripeptide motif lies at 68-70 (ECD).

It belongs to the venom metalloproteinase (M12B) family. P-III subfamily. P-IIIb sub-subfamily. In terms of assembly, monomer. As to expression, expressed by the venom gland.

It localises to the secreted. Its function is as follows. Inhibits human platelet aggregation stimulated by collagen with an IC(50) of 420 nM. The sequence is that of Disintegrin-like halysetin from Gloydius halys (Chinese water mocassin).